Reading from the N-terminus, the 409-residue chain is MVLSPKQEEELRFAVADYLQSCGYTNALEAFKKDASIPKEIDNKKYSGLLEKKWTSVVRLQKKVMDLELRLNNTTREMNSGVPTRNSRSSNDWIPRPPEKHSLSGHRSPITCVVFHPVYNVMVSSSEDASMKIWDYESGDFERTLRGHTDSVQDLAFDSSGKLLASSSADMTVKIWDFQTFECRMTLRGHDHNVSSVCFLPSGDFLLSSSRDKTIKMWEVATGYCVYNFEGHREWVRRVAVASDGSLMASCSNDQTVRIWSLSSKECKEELRGHEHVVECIKWAPESCNRYINEASGTEVPKGQKSGPFLASGSRDRVIKIWDVTTAVCLFSLVGHDNWVRGLAFHAGGKYLTSASDDKTIKIWELRHKRCSKSLEAHNHFVTTIDFHRSSPFVITGSVDLTIKVWECR.

One can recognise a LisH domain in the interval 7–39; the sequence is QEEELRFAVADYLQSCGYTNALEAFKKDASIPK. Residues 56 to 81 are a coiled coil; that stretch reads SVVRLQKKVMDLELRLNNTTREMNSG. A compositionally biased stretch (polar residues) spans 75 to 92; it reads TREMNSGVPTRNSRSSND. The segment at 75-105 is disordered; sequence TREMNSGVPTRNSRSSNDWIPRPPEKHSLSG. WD repeat units lie at residues 105 to 146, 147 to 186, 189 to 228, 231 to 270, 273 to 332, 335 to 374, and 377 to 409; these read GHRS…RTLR, GHTD…CRMT, GHDH…CVYN, GHRE…CKEE, GHEH…CLFS, GHDN…CSKS, and AHNH…WECR.

This sequence belongs to the WD repeat LIS1/nudF family.

It localises to the cytoplasm. It is found in the cytoskeleton. The protein localises to the microtubule organizing center. Its subcellular location is the centrosome. In terms of biological role, positively regulates the activity of the minus-end directed microtubule motor protein dynein. May enhance dynein-mediated microtubule sliding by targeting dynein to the microtubule plus end. Required for several dynein- and microtubule-dependent processes. This chain is Lissencephaly-1 homolog, found in Trichoplax adhaerens (Trichoplax reptans).